A 361-amino-acid polypeptide reads, in one-letter code: Protein C42 (361 aa).

An LXCXE motif region spans residues 32–36 (LLCDE). A Nuclear localization signal motif is present at residues 357 to 360 (KRKK).

The protein belongs to the baculoviridae C42 protein family. As to quaternary structure, forms a complex with proteins E27 and p78/83. The interaction with p78/83 mediates nuclear translocation of P78/83. Interacts with protein Ac102. Interacts with IE0.

Its subcellular location is the host nucleus. It is found in the virion. Functionally, plays a role in host nuclear actin polymerization by recruiting p78/73 protein that is capable of activating an actin-related protein 2/3 complex to initiate nuclear actin polymerization. In Lepidoptera (butterflies and moths), this protein is Protein C42.